A 577-amino-acid polypeptide reads, in one-letter code: Insulin-like growth factor 2 mRNA-binding protein 1 (577 aa).

RRM domains are found at residues Asn-2–Pro-75 and Arg-81–Asp-156. A phosphoserine mark is found at Ser-12 and Ser-73. The interval Ala-160–Lys-190 is disordered. Ser-181 carries the post-translational modification Phosphoserine. 4 KH domains span residues Asp-195–Ile-260, Glu-276–Ile-343, Gln-405–Ile-470, and Lys-487–Ile-553. The tract at residues Ile-310 to Glu-324 is sufficient for nuclear export. Residues Glu-485–Pro-495 form a sufficient for nuclear export region. The residue at position 528 (Thr-528) is a Phosphothreonine.

Belongs to the RRM IMP/VICKZ family. Can form homodimers and heterodimers with IGF2BP1 and IGF2BP3. Component of the coding region determinant (CRD)-mediated complex, composed of DHX9, HNRNPU, IGF2BP1, SYNCRIP and YBX1. During HCV infection, identified in a HCV IRES-mediated translation complex, at least composed of EIF3C, IGF2BP1, RPS3 and HCV RNA-replicon. Interacts (via the KH domains) with HIV-1 GAG (via the second zinc finger motif of NC). Associates (via the RRM domains and KH domains) with HIV-1 particles. Identified in a mRNP complex, composed of at least DHX9, DDX3X, ELAVL1, HNRNPU, IGF2BP1, ILF3, PABPC1, PCBP2, PTBP2, STAU1, STAU2, SYNCRIP and YBX1. Identified in a IGF2BP1-dependent mRNP granule complex containing untranslated mRNAs. Interacts with DHX9, ELAVL2, HNRNPA2B1, HNRNPC, HNRNPH1, HNRNPU, IGF2BP2, ILF2, and YBX1. Interacts with FMR1. Component of a multisubunit autoregulatory RNP complex (ARC), at least composed of IGF2BP1, PABPC1 and CSDE1/UNR. Directly interacts with PABPC1. Component of a TAU mRNP complex, at least composed of IGF2BP1, ELAVL4 and G3BP. Interacts with ELAVL4 in an RNA-dependent manner. Associates with microtubules and polysomes. Interacts with AGO1 and AGO2. Interacts with ELAVL1 and MATR3. Interacts (via KH3 and KH4 domains) with SEPIN14P20 peptide RBRP; the interaction results in increased binding of IGF2BP1 to N6-methyladenosine (m6A)-containing mRNAs. In terms of processing, phosphorylated at Ser-181 by mTORC2 cotranslationally, promoting binding to the 3'-UTR of IGF2 mRNA. Mainly expressed in the embryo, including in fetal liver, fetal lung, fetal kidney, fetal thymus (at protein level). Also expressed follicles of ovary, as well as in gonocytes of testis, spermatogonia, semen, oocytes and placenta (at protein level). Expressed in various cancers, including testis and lung cancers (at protein level), as well as kidney, prostate and trachea cancers.

The protein resides in the nucleus. It is found in the cytoplasm. It localises to the perinuclear region. Its subcellular location is the P-body. The protein localises to the stress granule. The protein resides in the cell projection. It is found in the lamellipodium. It localises to the dendrite. Its subcellular location is the dendritic spine. The protein localises to the growth cone. The protein resides in the filopodium. It is found in the axon. Its function is as follows. RNA-binding factor that recruits target transcripts to cytoplasmic protein-RNA complexes (mRNPs). This transcript 'caging' into mRNPs allows mRNA transport and transient storage. It also modulates the rate and location at which target transcripts encounter the translational apparatus and shields them from endonuclease attacks or microRNA-mediated degradation. Preferentially binds to N6-methyladenosine (m6A)-containing mRNAs and increases their stability. Plays a direct role in the transport and translation of transcripts required for axonal regeneration in adult sensory neurons. Regulates localized beta-actin/ACTB mRNA translation, a crucial process for cell polarity, cell migration and neurite outgrowth. Co-transcriptionally associates with the ACTB mRNA in the nucleus. This binding involves a conserved 54-nucleotide element in the ACTB mRNA 3'-UTR, known as the 'zipcode'. The RNP thus formed is exported to the cytoplasm, binds to a motor protein and is transported along the cytoskeleton to the cell periphery. During transport, prevents ACTB mRNA from being translated into protein. When the RNP complex reaches its destination near the plasma membrane, IGF2BP1 is phosphorylated. This releases the mRNA, allowing ribosomal 40S and 60S subunits to assemble and initiate ACTB protein synthesis. Monomeric ACTB then assembles into the subcortical actin cytoskeleton. During neuronal development, key regulator of neurite outgrowth, growth cone guidance and neuronal cell migration, presumably through the spatiotemporal fine tuning of protein synthesis, such as that of ACTB. May regulate mRNA transport to activated synapses. Binds to and stabilizes ABCB1/MDR-1 mRNA. During interstinal wound repair, interacts with and stabilizes PTGS2 transcript. PTGS2 mRNA stabilization may be crucial for colonic mucosal wound healing. Binds to the 3'-UTR of IGF2 mRNA by a mechanism of cooperative and sequential dimerization and regulates IGF2 mRNA subcellular localization and translation. Binds to MYC mRNA, in the coding region instability determinant (CRD) of the open reading frame (ORF), hence preventing MYC cleavage by endonucleases and possibly microRNA targeting to MYC-CRD. Binding to MYC mRNA is enhanced by m6A-modification of the CRD. Binds to the 3'-UTR of CD44 mRNA and stabilizes it, hence promotes cell adhesion and invadopodia formation in cancer cells. Binds to the oncofetal H19 transcript and to the neuron-specific TAU mRNA and regulates their localizations. Binds to and stabilizes BTRC/FBW1A mRNA. Binds to the adenine-rich autoregulatory sequence (ARS) located in PABPC1 mRNA and represses its translation. PABPC1 mRNA-binding is stimulated by PABPC1 protein. Prevents BTRC/FBW1A mRNA degradation by disrupting microRNA-dependent interaction with AGO2. Promotes the directed movement of tumor-derived cells by fine-tuning intracellular signaling networks. Binds to MAPK4 3'-UTR and inhibits its translation. Interacts with PTEN transcript open reading frame (ORF) and prevents mRNA decay. This combined action on MAPK4 (down-regulation) and PTEN (up-regulation) antagonizes HSPB1 phosphorylation, consequently it prevents G-actin sequestration by phosphorylated HSPB1, allowing F-actin polymerization. Hence enhances the velocity of cell migration and stimulates directed cell migration by PTEN-modulated polarization. Interacts with Hepatitis C virus (HCV) 5'-UTR and 3'-UTR and specifically enhances translation at the HCV IRES, but not 5'-cap-dependent translation, possibly by recruiting eIF3. Interacts with HIV-1 GAG protein and blocks the formation of infectious HIV-1 particles. Reduces HIV-1 assembly by inhibiting viral RNA packaging, as well as assembly and processing of GAG protein on cellular membranes. During cellular stress, such as oxidative stress or heat shock, stabilizes target mRNAs that are recruited to stress granules, including CD44, IGF2, MAPK4, MYC, PTEN, RAPGEF2 and RPS6KA5 transcripts. This is Insulin-like growth factor 2 mRNA-binding protein 1 (IGF2BP1) from Homo sapiens (Human).